We begin with the raw amino-acid sequence, 175 residues long: Large ribosomal subunit protein bL17 (175 aa).

A disordered region spans residues 124–175 (VKKSKPTAPAQAVATKPAVEETREAAAAQPQEPEVEISEVKDPAEECEAKAD). Residues 161-175 (SEVKDPAEECEAKAD) are compositionally biased toward basic and acidic residues.

This sequence belongs to the bacterial ribosomal protein bL17 family. As to quaternary structure, part of the 50S ribosomal subunit. Contacts protein L32.

The protein is Large ribosomal subunit protein bL17 of Geobacter sulfurreducens (strain ATCC 51573 / DSM 12127 / PCA).